The sequence spans 321 residues: NADH-ubiquinone oxidoreductase chain 1 (321 aa).

Helical transmembrane passes span Leu5–Thr25, Leu74–Pro94, Leu104–Gly124, Gly151–Ile171, Tyr175–Ala195, Phe227–Ile247, Glu256–Ile276, and Phe296–Gly316.

The protein belongs to the complex I subunit 1 family.

The protein resides in the mitochondrion inner membrane. The catalysed reaction is a ubiquinone + NADH + 5 H(+)(in) = a ubiquinol + NAD(+) + 4 H(+)(out). In terms of biological role, core subunit of the mitochondrial membrane respiratory chain NADH dehydrogenase (Complex I) that is believed to belong to the minimal assembly required for catalysis. Complex I functions in the transfer of electrons from NADH to the respiratory chain. The immediate electron acceptor for the enzyme is believed to be ubiquinone. The polypeptide is NADH-ubiquinone oxidoreductase chain 1 (MT-ND1) (Varanus baritji (Black-spotted ridge-tailed monitor)).